The primary structure comprises 354 residues: Membrane progestin receptor beta (354 aa).

Over 1-75 (MTTAILERLS…FFSLFQKHNE (75 aa)) the chain is Cytoplasmic. A helical transmembrane segment spans residues 76–96 (VVNVWTHLLAALAVLLRFWAF). The Extracellular portion of the chain corresponds to 97–111 (AEAEALPWASTHSLP). A helical membrane pass occupies residues 112-132 (LLLFILSSITYLTCSLLAHLL). Residues 133 to 174 (QSKSELSHYTFYFVDYVGVSVYQYGSALAHFFYSSDQAWYDR) lie on the Cytoplasmic side of the membrane. A helical membrane pass occupies residues 175–195 (FWLFFLPAAAFCGWLSCAGCC). Over 196 to 213 (YAKYRYRRPYPVMRKICQ) the chain is Extracellular. A helical membrane pass occupies residues 214 to 234 (VVPAGLAFILDISPVAHRVAL). Residues 235–243 (CHLAGCQEQ) lie on the Cytoplasmic side of the membrane. The helical transmembrane segment at 244–264 (AAWYHTLQILFFLVSAYFFSC) threads the bilayer. Topologically, residues 265-283 (PVPEKYFPGSCDIVGHGHQ) are extracellular. A helical transmembrane segment spans residues 284-304 (IFHAFLSICTLSQLEAILLDY). At 305–319 (QGRQEIFLQRHGPLS) the chain is on the cytoplasmic side. Residues 320–340 (VHMACLSFFFLAACSAATAAL) traverse the membrane as a helical segment. Residues 341–354 (LRHKVKARLTKKDS) lie on the Extracellular side of the membrane.

This sequence belongs to the ADIPOR family. In terms of tissue distribution, highly expressed in the hypothalamus. Also expressed in spinal cord, kidney and testis.

It is found in the cell membrane. In terms of biological role, plasma membrane progesterone (P4) receptor coupled to G proteins. Seems to act through a G(i) mediated pathway. May be involved in oocyte maturation. Also binds dehydroepiandrosterone (DHEA), pregnanolone, pregnenolone and allopregnanolone. This Homo sapiens (Human) protein is Membrane progestin receptor beta.